Reading from the N-terminus, the 416-residue chain is D-amino acid dehydrogenase (416 aa).

Residue 3-17 coordinates FAD; it reads VTILGAGVIGVTTAY.

Belongs to the DadA oxidoreductase family. It depends on FAD as a cofactor.

It carries out the reaction a D-alpha-amino acid + A + H2O = a 2-oxocarboxylate + AH2 + NH4(+). Its pathway is amino-acid degradation; D-alanine degradation; NH(3) and pyruvate from D-alanine: step 1/1. Functionally, oxidative deamination of D-amino acids. The polypeptide is D-amino acid dehydrogenase (Rhizobium rhizogenes (strain K84 / ATCC BAA-868) (Agrobacterium radiobacter)).